We begin with the raw amino-acid sequence, 252 residues long: 2-succinyl-6-hydroxy-2,4-cyclohexadiene-1-carboxylate synthase (252 aa).

It belongs to the AB hydrolase superfamily. MenH family. Monomer.

It catalyses the reaction 5-enolpyruvoyl-6-hydroxy-2-succinyl-cyclohex-3-ene-1-carboxylate = (1R,6R)-6-hydroxy-2-succinyl-cyclohexa-2,4-diene-1-carboxylate + pyruvate. The protein operates within quinol/quinone metabolism; 1,4-dihydroxy-2-naphthoate biosynthesis; 1,4-dihydroxy-2-naphthoate from chorismate: step 3/7. Its pathway is quinol/quinone metabolism; menaquinone biosynthesis. Catalyzes a proton abstraction reaction that results in 2,5-elimination of pyruvate from 2-succinyl-5-enolpyruvyl-6-hydroxy-3-cyclohexene-1-carboxylate (SEPHCHC) and the formation of 2-succinyl-6-hydroxy-2,4-cyclohexadiene-1-carboxylate (SHCHC). The polypeptide is 2-succinyl-6-hydroxy-2,4-cyclohexadiene-1-carboxylate synthase (Escherichia coli (strain SMS-3-5 / SECEC)).